The sequence spans 277 residues: Digeranylgeranylglyceryl phosphate synthase (277 aa).

7 helical membrane passes run isoleucine 16–isoleucine 36, glycine 40–phenylalanine 60, phenylalanine 101–alanine 121, phenylalanine 129–glycine 149, valine 153–methionine 173, isoleucine 205–glycine 225, and leucine 257–valine 277.

The protein belongs to the UbiA prenyltransferase family. DGGGP synthase subfamily. The cofactor is Mg(2+).

It is found in the cell membrane. It carries out the reaction sn-3-O-(geranylgeranyl)glycerol 1-phosphate + (2E,6E,10E)-geranylgeranyl diphosphate = 2,3-bis-O-(geranylgeranyl)-sn-glycerol 1-phosphate + diphosphate. Its pathway is membrane lipid metabolism; glycerophospholipid metabolism. Functionally, prenyltransferase that catalyzes the transfer of the geranylgeranyl moiety of geranylgeranyl diphosphate (GGPP) to the C2 hydroxyl of (S)-3-O-geranylgeranylglyceryl phosphate (GGGP). This reaction is the second ether-bond-formation step in the biosynthesis of archaeal membrane lipids. The protein is Digeranylgeranylglyceryl phosphate synthase of Pyrococcus abyssi (strain GE5 / Orsay).